Reading from the N-terminus, the 319-residue chain is N-acetylneuraminate lyase (319 aa).

Aceneuramate contacts are provided by threonine 51 and threonine 52. Catalysis depends on tyrosine 143, which acts as the Proton donor. Lysine 173 functions as the Schiff-base intermediate with substrate in the catalytic mechanism. Aceneuramate is bound by residues serine 175, glycine 199, aspartate 201, glutamate 202, and serine 218.

This sequence belongs to the DapA family. NanA subfamily. In terms of assembly, homotetramer.

The protein localises to the cytoplasm. The catalysed reaction is aceneuramate = aldehydo-N-acetyl-D-mannosamine + pyruvate. It participates in amino-sugar metabolism; N-acetylneuraminate degradation. Its function is as follows. Catalyzes the cleavage of N-acetylneuraminic acid (sialic acid) to form pyruvate and N-acetylmannosamine via a Schiff base intermediate. It prevents sialic acids from being recycled and returning to the cell surface. Involved in the N-glycolylneuraminic acid (Neu5Gc) degradation pathway. This chain is N-acetylneuraminate lyase, found in Sus scrofa (Pig).